The sequence spans 223 residues: MSQTKTAKVRVTLFFILVGGVLAMVAVVTDHWAVLSPHLEHHNETCEAAHFGLWRICTARVAVHNKDKSCEHVTPSGEKNCSYFRHFNPGESSEIFEFTTQKEYSISAAAIAIFSLGFIIVGSICAFLSFGNKRDYLLRPASMFYAFAGLCLIVSVEVMRQSVKRMIDSEDTVWIEHYYSWSFACACAAFILLFLGGLFLLLFSLPRMPQNPWESCMDAEPEH.

At M1–R10 the chain is on the cytoplasmic side. The helical transmembrane segment at V11–T29 threads the bilayer. Topologically, residues D30 to A109 are extracellular. 2 N-linked (GlcNAc...) asparagine glycosylation sites follow: N43 and N80. Residues C57 and C81 are joined by a disulfide bond. Residues A110 to F130 traverse the membrane as a helical segment. The Cytoplasmic segment spans residues G131–D135. The chain crosses the membrane as a helical span at residues Y136 to V156. Residues E157–S180 are Extracellular-facing. The helical transmembrane segment at W181–L205 threads the bilayer. Topologically, residues P206 to H223 are cytoplasmic.

Belongs to the PMP-22/EMP/MP20 family. CACNG subfamily. As to quaternary structure, component of a calcium channel complex consisting of a pore-forming alpha subunit (CACNA1S) and the ancillary subunits CACNB1 or CACNB2, CACNG1 and CACNA2D1. The channel complex contains alpha, beta, gamma and delta subunits in a 1:1:1:1 ratio, i.e. it contains either CACNB1 or CACNB2. In terms of processing, N-glycosylated. As to expression, detected in skeletal muscle (at protein level).

It is found in the cell membrane. The protein localises to the sarcolemma. Its function is as follows. Regulatory subunit of the voltage-gated calcium channel that gives rise to L-type calcium currents in skeletal muscle. Regulates channel inactivation kinetics. This is Voltage-dependent calcium channel gamma-1 subunit (Cacng1) from Mus musculus (Mouse).